The chain runs to 362 residues: Ferrochelatase (362 aa).

2 residues coordinate Fe cation: histidine 228 and glutamate 309.

The protein belongs to the ferrochelatase family.

The protein localises to the cytoplasm. The catalysed reaction is heme b + 2 H(+) = protoporphyrin IX + Fe(2+). The protein operates within porphyrin-containing compound metabolism; protoheme biosynthesis; protoheme from protoporphyrin-IX: step 1/1. In terms of biological role, catalyzes the ferrous insertion into protoporphyrin IX. The chain is Ferrochelatase from Bordetella pertussis (strain Tohama I / ATCC BAA-589 / NCTC 13251).